A 126-amino-acid polypeptide reads, in one-letter code: Tachykinin-3 (126 aa).

A signal peptide spans 1-20 (MRSTLLFAVILALSSARSLG). Residues 21 to 83 (AVCEESQEQV…VGPKESPLPQ (63 aa)) constitute a propeptide that is removed on maturation. Methionine 95 carries the post-translational modification Methionine amide. Residues 99-126 (NLQPDTPVDINQENIPSFGTFKYPPSVE) constitute a propeptide that is removed on maturation. The segment at 102–126 (PDTPVDINQENIPSFGTFKYPPSVE) is disordered.

The protein belongs to the tachykinin family.

Its subcellular location is the secreted. Tachykinins are active peptides which excite neurons, evoke behavioral responses, are potent vasodilators and secretagogues, and contract (directly or indirectly) many smooth muscles. Is a critical central regulator of gonadal function. In Bos taurus (Bovine), this protein is Tachykinin-3 (TAC3).